The sequence spans 347 residues: Syntaxin-32 (347 aa).

Residues 1–325 (MSARHGQSSY…RYLNSISSNR (325 aa)) are Cytoplasmic-facing. Disordered stretches follow at residues 172 to 191 (HESR…TNPF) and 208 to 251 (PLPW…QQMV). Composition is skewed to polar residues over residues 177–191 (QLFS…TNPF) and 213–222 (NGSSSSSSQL). The span at 237 to 249 (QQSQQQQQQQQQQ) shows a compositional bias: low complexity. Residues 255–317 (DTYMQGRAEA…EGAQSQLARY (63 aa)) enclose the t-SNARE coiled-coil homology domain. The helical; Anchor for type IV membrane protein transmembrane segment at 326 to 346 (WLMMKIFFVLIAFLMIFLFFV) threads the bilayer. Position 347 (A347) is a topological domain, vesicular.

The protein belongs to the syntaxin family. Part of the t-SNARE complex.

The protein localises to the golgi apparatus. It is found in the cis-Golgi network membrane. In terms of biological role, vesicle trafficking protein that functions in the secretory pathway. This is Syntaxin-32 (SYP32) from Arabidopsis thaliana (Mouse-ear cress).